The primary structure comprises 554 residues: Chaperonin GroEL (554 aa).

ATP is bound by residues 30–33 (TLGP), Lys-51, 87–91 (DGTTT), Gly-415, 479–481 (NAA), and Asp-495.

The protein belongs to the chaperonin (HSP60) family. As to quaternary structure, forms a cylinder of 14 subunits composed of two heptameric rings stacked back-to-back. Interacts with the co-chaperonin GroES.

It is found in the cytoplasm. It catalyses the reaction ATP + H2O + a folded polypeptide = ADP + phosphate + an unfolded polypeptide.. Functionally, together with its co-chaperonin GroES, plays an essential role in assisting protein folding. The GroEL-GroES system forms a nano-cage that allows encapsulation of the non-native substrate proteins and provides a physical environment optimized to promote and accelerate protein folding. The polypeptide is Chaperonin GroEL (Nitrosococcus oceani (strain ATCC 19707 / BCRC 17464 / JCM 30415 / NCIMB 11848 / C-107)).